The chain runs to 47 residues: Packaging protein P22 (47 aa).

A helical transmembrane segment spans residues 22–42; that stretch reads TGWLAFVGLIIVAIILWQQII.

In terms of assembly, heterodimer of P20 and P22; further multimerizes as hexamers of heterodimers. Part of the dodecameric portal complex that is composed of the packaging efficiency factor P6, the DNA packaging ATPase P9, and the internal heterododecamer P20/P22 which spans the virion inner membrane.

It is found in the virion membrane. Its function is as follows. Together with P22, forms the internal part of the portal complex embeded in the virion internal membrane and which plays critical roles in genome packaging and genome ejection. Both proteins multimerize as a single ring-shaped heterdodecamer arranged around a central channel and interact with the P6/P9 external part of the portal. This Enterobacteria phage PRD1 (Bacteriophage PRD1) protein is Packaging protein P22 (XXII).